Consider the following 378-residue polypeptide: Acetylornithine deacetylase (378 aa).

Histidine 76 lines the Zn(2+) pocket. Residue aspartate 78 is part of the active site. Aspartate 108 is a binding site for Zn(2+). The active site involves glutamate 140. Residues glutamate 141, glutamate 165, and histidine 351 each contribute to the Zn(2+) site.

It belongs to the peptidase M20A family. ArgE subfamily. As to quaternary structure, homodimer. Requires Zn(2+) as cofactor. Co(2+) serves as cofactor. Glutathione is required as a cofactor.

It is found in the cytoplasm. The catalysed reaction is N(2)-acetyl-L-ornithine + H2O = L-ornithine + acetate. It functions in the pathway amino-acid biosynthesis; L-arginine biosynthesis; L-ornithine from N(2)-acetyl-L-ornithine (linear): step 1/1. Catalyzes the hydrolysis of the amide bond of N(2)-acetylated L-amino acids. Cleaves the acetyl group from N-acetyl-L-ornithine to form L-ornithine, an intermediate in L-arginine biosynthesis pathway, and a branchpoint in the synthesis of polyamines. The chain is Acetylornithine deacetylase from Aliivibrio salmonicida (strain LFI1238) (Vibrio salmonicida (strain LFI1238)).